The following is a 510-amino-acid chain: Probable lipid II flippase MurJ (510 aa).

12 consecutive transmembrane segments (helical) span residues 13–33, 81–101, 130–150, 154–174, 182–202, 240–260, 266–286, 315–335, 357–377, 396–416, 443–463, and 481–501; these read DVVI…LFAN, GLVS…AALF, FPYL…NTIG, VMSF…LFLA, LALA…QIPF, INLL…ISWL, LLEF…LPTL, IFLL…PMLL, AFNA…GYYA, MGFN…ASAM, VFFV…WYYV, and LVWL…LLGV.

It belongs to the MurJ/MviN family.

Its subcellular location is the cell inner membrane. Its pathway is cell wall biogenesis; peptidoglycan biosynthesis. In terms of biological role, involved in peptidoglycan biosynthesis. Transports lipid-linked peptidoglycan precursors from the inner to the outer leaflet of the cytoplasmic membrane. This Haemophilus influenzae (strain ATCC 51907 / DSM 11121 / KW20 / Rd) protein is Probable lipid II flippase MurJ.